We begin with the raw amino-acid sequence, 103 residues long: MQNQRIRIRLKAFDHRLIDQSTTEIVETAKRTGAQVRGPIPLPTRKERFTILVSPHVNKDARDQYEIRTHKRLIDIVEPTEKTVDALMRLDLAAGVDVQISLG.

It belongs to the universal ribosomal protein uS10 family. In terms of assembly, part of the 30S ribosomal subunit.

Functionally, involved in the binding of tRNA to the ribosomes. In Buchnera aphidicola subsp. Acyrthosiphon pisum (strain 5A), this protein is Small ribosomal subunit protein uS10.